Reading from the N-terminus, the 63-residue chain is Large ribosomal subunit protein uL30 (63 aa).

This sequence belongs to the universal ribosomal protein uL30 family. Part of the 50S ribosomal subunit.

This Rickettsia peacockii (strain Rustic) protein is Large ribosomal subunit protein uL30.